The following is a 632-amino-acid chain: Armadillo repeat-containing X-linked protein 2 (632 aa).

Over 1–6 (MSRVRD) the chain is Mitochondrial intermembrane. The tract at residues 1 to 6 (MSRVRD) is mitochondrion outer membrane (MOM)-targeting sequence. Residues 7-25 (AGCVAAGIVIGAGAWYCVY) traverse the membrane as a helical; Signal-anchor segment. The mitochondrion outer membrane (MOM)-targeting sequence stretch occupies residues 26–40 (KYTRGRDQTKKRMAK). The Cytoplasmic portion of the chain corresponds to 26–632 (KYTRGRDQTK…VKVIKLVNKF (607 aa)). 3 disordered regions span residues 68–124 (GFSP…AGVG), 160–304 (APKV…KVEV), and 335–369 (VPDS…RPVA). Composition is skewed to low complexity over residues 86 to 120 (EASA…EADG) and 211 to 241 (VASP…SPGT). Over residues 336–356 (PDSEEGESGWTDTESDSDSEP) the composition is skewed to acidic residues. 3 ARM repeats span residues 376–416 (PYEI…NNAN), 418–457 (SCNQ…NLSE), and 498–537 (ITND…NFAE).

The protein belongs to the eutherian X-chromosome-specific Armcx family. Expressed at high levels ovary, heart, testis, prostate, brain, spleen and colon. Expressed at very low levels in liver and thymus. Not expressed in peripheral blood leukocytes. Not expressed in pancreas and ovarian carcinomas.

Its subcellular location is the mitochondrion. The protein resides in the mitochondrion outer membrane. In terms of biological role, may regulate the dynamics and distribution of mitochondria in neural cells. In Homo sapiens (Human), this protein is Armadillo repeat-containing X-linked protein 2 (ARMCX2).